An 806-amino-acid polypeptide reads, in one-letter code: Leucine--tRNA ligase (806 aa).

A 'HIGH' region motif is present at residues 40 to 51 (PYPSGKGLHVGH). Residues 580-584 (KMSKS) carry the 'KMSKS' region motif. Residue Lys-583 coordinates ATP.

This sequence belongs to the class-I aminoacyl-tRNA synthetase family.

Its subcellular location is the cytoplasm. It carries out the reaction tRNA(Leu) + L-leucine + ATP = L-leucyl-tRNA(Leu) + AMP + diphosphate. The chain is Leucine--tRNA ligase from Ureaplasma parvum serovar 3 (strain ATCC 27815 / 27 / NCTC 11736).